The following is a 78-amino-acid chain: Gas vesicle protein A (78 aa).

It belongs to the gas vesicle GvpA family. The gas vesicle shell is 2 nm thick and consists of a single layer of this protein. It forms helical ribs nearly perpendicular to the long axis of the vesicle.

It localises to the gas vesicle shell. In terms of biological role, gas vesicles are hollow, gas filled proteinaceous nanostructures found in some microorganisms. During planktonic growth they allow positioning of the organism at a favorable depth for light or nutrient acquisition. GvpA forms the protein shell. This is Gas vesicle protein A from Halorubrum vacuolatum (Natronobacterium vacuolatum).